The sequence spans 179 residues: Large ribosomal subunit protein uL5 (179 aa).

The protein belongs to the universal ribosomal protein uL5 family. In terms of assembly, part of the 50S ribosomal subunit; part of the 5S rRNA/L5/L18/L25 subcomplex. Contacts the 5S rRNA and the P site tRNA. Forms a bridge to the 30S subunit in the 70S ribosome.

Functionally, this is one of the proteins that bind and probably mediate the attachment of the 5S RNA into the large ribosomal subunit, where it forms part of the central protuberance. In the 70S ribosome it contacts protein S13 of the 30S subunit (bridge B1b), connecting the 2 subunits; this bridge is implicated in subunit movement. Contacts the P site tRNA; the 5S rRNA and some of its associated proteins might help stabilize positioning of ribosome-bound tRNAs. The polypeptide is Large ribosomal subunit protein uL5 (Staphylococcus epidermidis (strain ATCC 35984 / DSM 28319 / BCRC 17069 / CCUG 31568 / BM 3577 / RP62A)).